The sequence spans 217 residues: 3,4-dihydroxy-2-butanone 4-phosphate synthase (217 aa).

D-ribulose 5-phosphate is bound by residues 37-38 (RE), Asp42, 150-154 (RRGHT), and Glu174. A Mg(2+)-binding site is contributed by Glu38. His153 contacts Mg(2+).

It belongs to the DHBP synthase family. In terms of assembly, homodimer. Mg(2+) is required as a cofactor. It depends on Mn(2+) as a cofactor.

It catalyses the reaction D-ribulose 5-phosphate = (2S)-2-hydroxy-3-oxobutyl phosphate + formate + H(+). It participates in cofactor biosynthesis; riboflavin biosynthesis; 2-hydroxy-3-oxobutyl phosphate from D-ribulose 5-phosphate: step 1/1. Catalyzes the conversion of D-ribulose 5-phosphate to formate and 3,4-dihydroxy-2-butanone 4-phosphate. The sequence is that of 3,4-dihydroxy-2-butanone 4-phosphate synthase from Yersinia enterocolitica serotype O:8 / biotype 1B (strain NCTC 13174 / 8081).